Here is a 679-residue protein sequence, read N- to C-terminus: DNA ligase (679 aa).

NAD(+) is bound by residues 41–45, 90–91, and Glu-120; these read DSVYD and SL. The active-site N6-AMP-lysine intermediate is Lys-122. The NAD(+) site is built by Arg-143, Glu-177, Lys-293, and Lys-317. Zn(2+) contacts are provided by Cys-411, Cys-414, Cys-429, and Cys-434. The BRCT domain maps to 597–679; it reads DSNSWFAGKR…SETMREDAQA (83 aa).

This sequence belongs to the NAD-dependent DNA ligase family. LigA subfamily. The cofactor is Mg(2+). Mn(2+) is required as a cofactor.

The enzyme catalyses NAD(+) + (deoxyribonucleotide)n-3'-hydroxyl + 5'-phospho-(deoxyribonucleotide)m = (deoxyribonucleotide)n+m + AMP + beta-nicotinamide D-nucleotide.. Its function is as follows. DNA ligase that catalyzes the formation of phosphodiester linkages between 5'-phosphoryl and 3'-hydroxyl groups in double-stranded DNA using NAD as a coenzyme and as the energy source for the reaction. It is essential for DNA replication and repair of damaged DNA. The polypeptide is DNA ligase (Lactiplantibacillus plantarum (strain ATCC BAA-793 / NCIMB 8826 / WCFS1) (Lactobacillus plantarum)).